The sequence spans 464 residues: Argininosuccinate lyase (464 aa).

It belongs to the lyase 1 family. Argininosuccinate lyase subfamily.

Its subcellular location is the cytoplasm. It carries out the reaction 2-(N(omega)-L-arginino)succinate = fumarate + L-arginine. It functions in the pathway amino-acid biosynthesis; L-arginine biosynthesis; L-arginine from L-ornithine and carbamoyl phosphate: step 3/3. This Azotobacter vinelandii (strain DJ / ATCC BAA-1303) protein is Argininosuccinate lyase.